The sequence spans 241 residues: Small ribosomal subunit protein uS3 (241 aa).

In terms of domain architecture, KH type-2 spans 39–108 (IREGVLKLLK…NLKVEVKVIE (70 aa)). Positions 215–241 (SQRVSEKAPMNNDRRFNNKNNNRGGRK) are disordered. Low complexity predominate over residues 232-241 (NKNNNRGGRK).

It belongs to the universal ribosomal protein uS3 family. In terms of assembly, part of the 30S ribosomal subunit. Forms a tight complex with proteins S10 and S14.

In terms of biological role, binds the lower part of the 30S subunit head. Binds mRNA in the 70S ribosome, positioning it for translation. The protein is Small ribosomal subunit protein uS3 of Mesoplasma florum (strain ATCC 33453 / NBRC 100688 / NCTC 11704 / L1) (Acholeplasma florum).